The following is a 317-amino-acid chain: DNA-directed RNA polymerase subunit alpha (317 aa).

Positions Met-1–Thr-230 are alpha N-terminal domain (alpha-NTD). The alpha C-terminal domain (alpha-CTD) stretch occupies residues Lys-247–Glu-317.

This sequence belongs to the RNA polymerase alpha chain family. In terms of assembly, homodimer. The RNAP catalytic core consists of 2 alpha, 1 beta, 1 beta' and 1 omega subunit. When a sigma factor is associated with the core the holoenzyme is formed, which can initiate transcription.

It catalyses the reaction RNA(n) + a ribonucleoside 5'-triphosphate = RNA(n+1) + diphosphate. In terms of biological role, DNA-dependent RNA polymerase catalyzes the transcription of DNA into RNA using the four ribonucleoside triphosphates as substrates. The sequence is that of DNA-directed RNA polymerase subunit alpha from Alkaliphilus oremlandii (strain OhILAs) (Clostridium oremlandii (strain OhILAs)).